The following is a 204-amino-acid chain: FMN-dependent NADH:quinone oxidoreductase (204 aa).

FMN contacts are provided by residues Ser-10, Ser-15 to Ser-17, and Thr-139 to Gly-142.

This sequence belongs to the azoreductase type 1 family. In terms of assembly, homodimer. The cofactor is FMN.

The catalysed reaction is 2 a quinone + NADH + H(+) = 2 a 1,4-benzosemiquinone + NAD(+). It carries out the reaction N,N-dimethyl-1,4-phenylenediamine + anthranilate + 2 NAD(+) = 2-(4-dimethylaminophenyl)diazenylbenzoate + 2 NADH + 2 H(+). Its function is as follows. Quinone reductase that provides resistance to thiol-specific stress caused by electrophilic quinones. In terms of biological role, also exhibits azoreductase activity. Catalyzes the reductive cleavage of the azo bond in aromatic azo compounds to the corresponding amines. The chain is FMN-dependent NADH:quinone oxidoreductase from Rhizobium leguminosarum bv. trifolii (strain WSM2304).